The primary structure comprises 349 residues: N-acetyltaurine hydrolase (349 aa).

6 residues coordinate a divalent metal cation: His26, His28, Glu169, His201, His230, and Asp298.

It belongs to the metallo-dependent hydrolases superfamily. Phosphotriesterase family. A divalent metal cation serves as cofactor.

It localises to the cytoplasm. The protein localises to the cytosol. The catalysed reaction is N-acetyltaurine + H2O = taurine + acetate. It catalyses the reaction N-propanoyltaurine + H2O = propanoate + taurine. The enzyme catalyses N-acetyl-L-methionine + H2O = L-methionine + acetate. It carries out the reaction N-acetyl-L-isoleucine + H2O = L-isoleucine + acetate. The catalysed reaction is N-acetyl-L-leucine + H2O = L-leucine + acetate. It catalyses the reaction N-acetyl-L-valine + H2O = L-valine + acetate. Its function is as follows. N-acetyltaurine hydrolase that regulates feeding by catalyzing the hydrolysis of N-acetyltaurine into taurine and acetate. N-acetyltaurine has anorexigenic and anti-obesity effects that are dependent on GFRAL receptor and GDF15. PTER also acts on other N-acetyl amino acids (Met, Ile, Leu, Val) and N-propionyltaurine, but at lower rates. This Pongo abelii (Sumatran orangutan) protein is N-acetyltaurine hydrolase.